A 486-amino-acid chain; its full sequence is uncharacterized protein (486 aa).

9 LRR repeats span residues 18–39 (NLKK…KKLV), 43–59 (ELHI…NIPE), 60–81 (NIKS…TKLK), 82–103 (NITY…ILPH), 104–125 (SIEF…NNLV), 126–147 (NLKK…FPIS), 148–168 (IVEL…EKLI), 169–190 (NLKK…IKFP), and 198–219 (DYQS…IEYE).

This is an uncharacterized protein from Amsacta moorei entomopoxvirus (AmEPV).